The primary structure comprises 101 residues: Small ribosomal subunit protein uS14 (101 aa).

The protein belongs to the universal ribosomal protein uS14 family. In terms of assembly, part of the 30S ribosomal subunit. Contacts proteins S3 and S10.

Functionally, binds 16S rRNA, required for the assembly of 30S particles and may also be responsible for determining the conformation of the 16S rRNA at the A site. This Neisseria meningitidis serogroup C / serotype 2a (strain ATCC 700532 / DSM 15464 / FAM18) protein is Small ribosomal subunit protein uS14.